A 227-amino-acid chain; its full sequence is Cytochrome c oxidase subunit 2 (227 aa).

The Mitochondrial intermembrane segment spans residues 1–14 (MAYPFQLGLQDATS). Residues 15-45 (PIMEELLHFHDHTLMIVFLISSLVLYIISLM) form a helical membrane-spanning segment. The Mitochondrial matrix segment spans residues 46 to 59 (LTTKLTHTSTMDAQ). A helical transmembrane segment spans residues 60-87 (EVETVWTILPAIILILIALPSLRILYMM). Residues 88 to 227 (DEINNPSLTV…YFETWSAVMV (140 aa)) lie on the Mitochondrial intermembrane side of the membrane. The Cu cation site is built by H161, C196, E198, C200, H204, and M207. Residue E198 coordinates Mg(2+). A Phosphotyrosine modification is found at Y218.

This sequence belongs to the cytochrome c oxidase subunit 2 family. In terms of assembly, component of the cytochrome c oxidase (complex IV, CIV), a multisubunit enzyme composed of 14 subunits. The complex is composed of a catalytic core of 3 subunits MT-CO1, MT-CO2 and MT-CO3, encoded in the mitochondrial DNA, and 11 supernumerary subunits COX4I, COX5A, COX5B, COX6A, COX6B, COX6C, COX7A, COX7B, COX7C, COX8 and NDUFA4, which are encoded in the nuclear genome. The complex exists as a monomer or a dimer and forms supercomplexes (SCs) in the inner mitochondrial membrane with NADH-ubiquinone oxidoreductase (complex I, CI) and ubiquinol-cytochrome c oxidoreductase (cytochrome b-c1 complex, complex III, CIII), resulting in different assemblies (supercomplex SCI(1)III(2)IV(1) and megacomplex MCI(2)III(2)IV(2)). Found in a complex with TMEM177, COA6, COX18, COX20, SCO1 and SCO2. Interacts with TMEM177 in a COX20-dependent manner. Interacts with COX20. Interacts with COX16. The cofactor is Cu cation.

It localises to the mitochondrion inner membrane. It catalyses the reaction 4 Fe(II)-[cytochrome c] + O2 + 8 H(+)(in) = 4 Fe(III)-[cytochrome c] + 2 H2O + 4 H(+)(out). Functionally, component of the cytochrome c oxidase, the last enzyme in the mitochondrial electron transport chain which drives oxidative phosphorylation. The respiratory chain contains 3 multisubunit complexes succinate dehydrogenase (complex II, CII), ubiquinol-cytochrome c oxidoreductase (cytochrome b-c1 complex, complex III, CIII) and cytochrome c oxidase (complex IV, CIV), that cooperate to transfer electrons derived from NADH and succinate to molecular oxygen, creating an electrochemical gradient over the inner membrane that drives transmembrane transport and the ATP synthase. Cytochrome c oxidase is the component of the respiratory chain that catalyzes the reduction of oxygen to water. Electrons originating from reduced cytochrome c in the intermembrane space (IMS) are transferred via the dinuclear copper A center (CU(A)) of subunit 2 and heme A of subunit 1 to the active site in subunit 1, a binuclear center (BNC) formed by heme A3 and copper B (CU(B)). The BNC reduces molecular oxygen to 2 water molecules using 4 electrons from cytochrome c in the IMS and 4 protons from the mitochondrial matrix. This chain is Cytochrome c oxidase subunit 2 (MT-CO2), found in Lycalopex vetulus (Hoary fox).